Consider the following 176-residue polypeptide: Xanthine-guanine phosphoribosyltransferase (176 aa).

Residues 51-52 (RG), arginine 88, and 111-119 (DDLVDSGKT) contribute to the 5-phospho-alpha-D-ribose 1-diphosphate site. Arginine 88 lines the GMP pocket. Aspartate 112 contributes to the Mg(2+) binding site. Residues aspartate 115 and isoleucine 158 each coordinate guanine. Xanthine-binding residues include aspartate 115 and isoleucine 158. GMP-binding positions include 115–119 (DSGKT) and 157–158 (WI).

This sequence belongs to the purine/pyrimidine phosphoribosyltransferase family. XGPT subfamily. As to quaternary structure, homotetramer. Requires Mg(2+) as cofactor.

The protein localises to the cell inner membrane. It catalyses the reaction GMP + diphosphate = guanine + 5-phospho-alpha-D-ribose 1-diphosphate. The catalysed reaction is XMP + diphosphate = xanthine + 5-phospho-alpha-D-ribose 1-diphosphate. The enzyme catalyses IMP + diphosphate = hypoxanthine + 5-phospho-alpha-D-ribose 1-diphosphate. The protein operates within purine metabolism; GMP biosynthesis via salvage pathway; GMP from guanine: step 1/1. It functions in the pathway purine metabolism; XMP biosynthesis via salvage pathway; XMP from xanthine: step 1/1. Purine salvage pathway enzyme that catalyzes the transfer of the ribosyl-5-phosphate group from 5-phospho-alpha-D-ribose 1-diphosphate (PRPP) to the N9 position of the 6-oxopurines guanine and xanthine to form the corresponding ribonucleotides GMP (guanosine 5'-monophosphate) and XMP (xanthosine 5'-monophosphate), with the release of PPi. To a lesser extent, also acts on hypoxanthine. The protein is Xanthine-guanine phosphoribosyltransferase of Ruegeria sp. (strain TM1040) (Silicibacter sp.).